The primary structure comprises 397 residues: SET domain-containing protein 4 (397 aa).

Residues 29–245 (AKLEPCRFKE…KCSEVFINYG (217 aa)) enclose the SET domain. Y244 provides a ligand contact to S-adenosyl-L-methionine.

This sequence belongs to the class V-like SAM-binding methyltransferase superfamily. SETD4 family.

It localises to the nucleus. The enzyme catalyses L-lysyl(79)-[histone H3] + 3 S-adenosyl-L-methionine = N(6),N(6),N(6)-trimethyl-L-lysyl(79)-[histone H3] + 3 S-adenosyl-L-homocysteine + 3 H(+). It catalyses the reaction L-lysyl(20)-[histone H4] + S-adenosyl-L-methionine = N(6)-methyl-L-lysyl(20)-[histone H4] + S-adenosyl-L-homocysteine + H(+). It carries out the reaction N(6)-methyl-L-lysyl(20)-[histone H4] + S-adenosyl-L-methionine = N(6),N(6)-dimethyl-L-lysyl(20)-[histone H4] + S-adenosyl-L-homocysteine + H(+). The catalysed reaction is N(6),N(6)-dimethyl-L-lysyl(20)-[histone H4] + S-adenosyl-L-methionine = N(6),N(6),N(6)-trimethyl-L-lysyl(20)-[histone H4] + S-adenosyl-L-homocysteine + H(+). Its function is as follows. Protein-lysine N-methyltransferase involved in the regulation of cell quiescence by catalyzing the trimethylation of 'Lys-20' of histone H4 and 'Lys-79' of histone H3 (H4K20me3 and H3K79me3, respectively) during diapause formation, a state of obligate dormancy. In Artemia parthenogenetica (Brine shrimp), this protein is SET domain-containing protein 4.